A 239-amino-acid chain; its full sequence is Purine nucleoside phosphorylase DeoD-type 1 (239 aa).

Histidine 5 provides a ligand contact to a purine D-ribonucleoside. Phosphate contacts are provided by residues glycine 21, arginine 25, arginine 44, and 88–91 (RVGS). A purine D-ribonucleoside is bound by residues 180 to 182 (EME) and 204 to 205 (SD). The active-site Proton donor is aspartate 205.

The protein belongs to the PNP/UDP phosphorylase family. As to quaternary structure, homohexamer; trimer of homodimers.

The enzyme catalyses a purine D-ribonucleoside + phosphate = a purine nucleobase + alpha-D-ribose 1-phosphate. The catalysed reaction is a purine 2'-deoxy-D-ribonucleoside + phosphate = a purine nucleobase + 2-deoxy-alpha-D-ribose 1-phosphate. Its function is as follows. Catalyzes the reversible phosphorolytic breakdown of the N-glycosidic bond in the beta-(deoxy)ribonucleoside molecules, with the formation of the corresponding free purine bases and pentose-1-phosphate. This is Purine nucleoside phosphorylase DeoD-type 1 from Vibrio vulnificus (strain CMCP6).